Consider the following 309-residue polypeptide: MSIRIIPQDELGSSEKRTADMIPPLLFPRLKNLYNRRAERLRELAENNPLGDYLRFAALIAHAQEVVLYDHPLEMDLTTRIKEASAQGKPPLDIHVLPRDKHWQKLLMALIAELKPEMSGPALAVIENLEKASTQELEDMASALFASDFSSVSSDKAPFIWAALSLYWAQMANLIPGKARAEYGEQRQYCPVCGSMPVSSMVQIGTTQGLRYLHCNLCETEWHVVRVKCSNCEQSGKLHYWSLDDEQAAIKAESCDDCGTYLKILYQEKDPKIEAVADDLASLVLDARMEQEGYARSSINPFLFPGEGE.

The protein belongs to the FdhE family.

The protein resides in the cytoplasm. In terms of biological role, necessary for formate dehydrogenase activity. The sequence is that of Protein FdhE from Escherichia coli (strain SMS-3-5 / SECEC).